The following is a 470-amino-acid chain: Ribulose bisphosphate carboxylase large chain (470 aa).

Substrate is bound by residues Asn115 and Thr165. Lys167 serves as the catalytic Proton acceptor. Residue Lys169 coordinates substrate. Positions 193, 195, and 196 each coordinate Mg(2+). Lys193 carries the N6-carboxylysine modification. Residue His286 is the Proton acceptor of the active site. Residues Arg287, His319, and Ser371 each coordinate substrate.

This sequence belongs to the RuBisCO large chain family. Type I subfamily. As to quaternary structure, heterohexadecamer of 8 large chains and 8 small chains. Mg(2+) is required as a cofactor.

The protein localises to the carboxysome. It catalyses the reaction 2 (2R)-3-phosphoglycerate + 2 H(+) = D-ribulose 1,5-bisphosphate + CO2 + H2O. It carries out the reaction D-ribulose 1,5-bisphosphate + O2 = 2-phosphoglycolate + (2R)-3-phosphoglycerate + 2 H(+). In terms of biological role, ruBisCO catalyzes two reactions: the carboxylation of D-ribulose 1,5-bisphosphate, the primary event in carbon dioxide fixation, as well as the oxidative fragmentation of the pentose substrate in the photorespiration process. Both reactions occur simultaneously and in competition at the same active site. The protein is Ribulose bisphosphate carboxylase large chain of Prochlorococcus marinus (strain MIT 9303).